The primary structure comprises 77 residues: Metallothionein-like protein 2B (77 aa).

Belongs to the metallothionein superfamily. Type 15 family. In terms of tissue distribution, expressed in vascular tissues of all organs. Expressed in root and leaf phloem, pollen and root hairs.

Metallothioneins have a high content of cysteine residues that bind various heavy metals. Functions as a metal chelator of copper (Cu) and zinc (Zn). Functions cooperatively with the phytochelatin synthase PCS1 to protect plants from Cu and cadmium toxicity. Plays a role in Cu homeostasis, specifically in the remobilization of Cu from senescing leaves. The mobilization of Cu from internal sources is important for seed development. This Arabidopsis thaliana (Mouse-ear cress) protein is Metallothionein-like protein 2B (MT2B).